We begin with the raw amino-acid sequence, 195 residues long: Phosphoheptose isomerase (195 aa).

Residues 37–195 (ISDSFKQHGK…IEFEMAKIRQ (159 aa)) enclose the SIS domain. A substrate-binding site is contributed by 52-54 (NGG). Zn(2+)-binding residues include H61 and E65. Substrate is bound by residues E65, 93–94 (ND), 119–121 (STS), S124, and Q172. Zn(2+) is bound by residues Q172 and H180.

This sequence belongs to the SIS family. GmhA subfamily. In terms of assembly, homotetramer. The cofactor is Zn(2+).

Its subcellular location is the cytoplasm. It catalyses the reaction 2 D-sedoheptulose 7-phosphate = D-glycero-alpha-D-manno-heptose 7-phosphate + D-glycero-beta-D-manno-heptose 7-phosphate. It functions in the pathway carbohydrate biosynthesis; D-glycero-D-manno-heptose 7-phosphate biosynthesis; D-glycero-alpha-D-manno-heptose 7-phosphate and D-glycero-beta-D-manno-heptose 7-phosphate from sedoheptulose 7-phosphate: step 1/1. Its function is as follows. Catalyzes the isomerization of sedoheptulose 7-phosphate in D-glycero-D-manno-heptose 7-phosphate. The protein is Phosphoheptose isomerase of Histophilus somni (strain 2336) (Haemophilus somnus).